A 150-amino-acid chain; its full sequence is Endoribonuclease YbeY (150 aa).

Residues H116, H120, and H126 each coordinate Zn(2+).

Belongs to the endoribonuclease YbeY family. The cofactor is Zn(2+).

The protein resides in the cytoplasm. In terms of biological role, single strand-specific metallo-endoribonuclease involved in late-stage 70S ribosome quality control and in maturation of the 3' terminus of the 16S rRNA. This chain is Endoribonuclease YbeY, found in Beutenbergia cavernae (strain ATCC BAA-8 / DSM 12333 / CCUG 43141 / JCM 11478 / NBRC 16432 / NCIMB 13614 / HKI 0122).